Reading from the N-terminus, the 100-residue chain is MNSSCEKIFGVLRSPRVSEKSSRLQEISNVYVFEVSSDATKIDVKNAVERLFDVKVGVVRVLNVKGKSKSFRNRGGSRSGWRKAYVRLIDGQSIDVASSV.

The protein belongs to the universal ribosomal protein uL23 family. Part of the 50S ribosomal subunit. Contacts protein L29, and trigger factor when it is bound to the ribosome.

Its function is as follows. One of the early assembly proteins it binds 23S rRNA. One of the proteins that surrounds the polypeptide exit tunnel on the outside of the ribosome. Forms the main docking site for trigger factor binding to the ribosome. The sequence is that of Large ribosomal subunit protein uL23 from Xylella fastidiosa (strain M23).